Reading from the N-terminus, the 434-residue chain is Eukaryotic translation initiation factor 3 subunit E (434 aa).

In terms of domain architecture, PCI spans 219 to 392 (FFNHPKGRDL…GHVVMGTQPL (174 aa)).

It belongs to the eIF-3 subunit E family. As to quaternary structure, component of the eukaryotic translation initiation factor 3 (eIF-3) complex. The eIF-3 complex interacts with pix. Interacts with mxt.

The protein resides in the cytoplasm. Its function is as follows. Component of the eukaryotic translation initiation factor 3 (eIF-3) complex, which is involved in protein synthesis of a specialized repertoire of mRNAs and, together with other initiation factors, stimulates binding of mRNA and methionyl-tRNAi to the 40S ribosome. The eIF-3 complex specifically targets and initiates translation of a subset of mRNAs involved in cell proliferation. The sequence is that of Eukaryotic translation initiation factor 3 subunit E (eIF3-S6) from Drosophila ananassae (Fruit fly).